An 85-amino-acid polypeptide reads, in one-letter code: Toxin BmKaIT1 (85 aa).

A signal peptide spans 1–19 (MNYLVMISFAFLLMTGVES). Residues 21 to 83 (RDAYIAQNYN…VPIRVPGKCH (63 aa)) enclose the LCN-type CS-alpha/beta domain. Cystine bridges form between Cys31/Cys82, Cys35/Cys55, Cys41/Cys65, and Cys45/Cys67. Residues 84–85 (RR) constitute a propeptide, removed by a carboxypeptidase.

This sequence belongs to the long (4 C-C) scorpion toxin superfamily. Sodium channel inhibitor family. Alpha subfamily. In terms of tissue distribution, expressed by the venom gland.

It is found in the secreted. Functionally, alpha toxins bind voltage-independently at site-3 of sodium channels (Nav) and inhibit the inactivation of the activated channels, thereby blocking neuronal transmission. Shows a high toxicity toward insects and moderate toxicity against mammals. This Olivierus martensii (Manchurian scorpion) protein is Toxin BmKaIT1.